The primary structure comprises 215 residues: Ribose-5-phosphate isomerase A (215 aa).

Substrate is bound by residues 26–29 (TGST), 79–82 (DGAD), and 92–95 (KGGG). Residue glutamate 101 is the Proton acceptor of the active site. Residue lysine 119 participates in substrate binding.

It belongs to the ribose 5-phosphate isomerase family. As to quaternary structure, homodimer.

The enzyme catalyses aldehydo-D-ribose 5-phosphate = D-ribulose 5-phosphate. Its pathway is carbohydrate degradation; pentose phosphate pathway; D-ribose 5-phosphate from D-ribulose 5-phosphate (non-oxidative stage): step 1/1. In terms of biological role, catalyzes the reversible conversion of ribose-5-phosphate to ribulose 5-phosphate. The polypeptide is Ribose-5-phosphate isomerase A (Xylella fastidiosa (strain Temecula1 / ATCC 700964)).